Consider the following 409-residue polypeptide: Serine/threonine transporter SstT (409 aa).

9 helical membrane passes run 24-44 (LALGIVIGSVSPQLGLAAGLF), 48-68 (FVGALKAVAPVLVFILVAATI), 82-102 (IIVLYLIGTFSAALTAVIAGM), 142-162 (AIANANYIGILAWALVLGAAL), 194-214 (LGIFGLVSSTIAETGFGALAG), 218-238 (LLAVLLGCMAFIALAVNPAIV), 292-312 (IPLGATVNMGGAAITITVLAM), 319-339 (GIQVDFATALLLSLVATVSAC), and 365-385 (VAMQVVAVGFIIGVIQDSAET).

The protein belongs to the dicarboxylate/amino acid:cation symporter (DAACS) (TC 2.A.23) family.

The protein resides in the cell inner membrane. It catalyses the reaction L-serine(in) + Na(+)(in) = L-serine(out) + Na(+)(out). The enzyme catalyses L-threonine(in) + Na(+)(in) = L-threonine(out) + Na(+)(out). Its function is as follows. Involved in the import of serine and threonine into the cell, with the concomitant import of sodium (symport system). This chain is Serine/threonine transporter SstT, found in Neisseria gonorrhoeae (strain NCCP11945).